The following is a 331-amino-acid chain: Phenylalanine--tRNA ligase alpha subunit (331 aa).

Residue Glu252 coordinates Mg(2+).

This sequence belongs to the class-II aminoacyl-tRNA synthetase family. Phe-tRNA synthetase alpha subunit type 1 subfamily. As to quaternary structure, tetramer of two alpha and two beta subunits. Mg(2+) is required as a cofactor.

It localises to the cytoplasm. It carries out the reaction tRNA(Phe) + L-phenylalanine + ATP = L-phenylalanyl-tRNA(Phe) + AMP + diphosphate + H(+). The chain is Phenylalanine--tRNA ligase alpha subunit from Xanthomonas axonopodis pv. citri (strain 306).